The following is a 490-amino-acid chain: Transcriptional regulator FleQ (490 aa).

L142 lines the 3',3'-c-di-GMP pocket. Residues V147 and 177–182 contribute to the ADP site; that span reads GTGKEV. 3',3'-c-di-GMP contacts are provided by residues 186–189 and 330–341; these read NLHY and ELISRMEHEKRG. Residues R334 and R363 each coordinate ADP.

In terms of assembly, forms homodimers. Forms homohexamers that inhibit transcription initiation. Interacts with FleN; this complex is formed in the presence as well as in the absence of c-di-GMP or ATP.

With respect to regulation, C-di-GMP interaction leads to active site obstruction, hexameric ring destabilization thus relieving DNA bending and activating gene transcription. Its function is as follows. AAA+ ATPase enhancer-binding protein that acts as a transcription regulator and plays a role in the modulation of mucin adhesion and flagellar gene expression. In addition to flagella genes, also regulates expression of biofilm-related genes. Functions as a transcriptional repressor in the absence of c-di-GMP and as an activator when c-di-GMP is present. The sequence is that of Transcriptional regulator FleQ from Pseudomonas aeruginosa (strain ATCC 15692 / DSM 22644 / CIP 104116 / JCM 14847 / LMG 12228 / 1C / PRS 101 / PAO1).